The following is a 439-amino-acid chain: DNA 3'-5' translocase XPB2 (439 aa).

The DRD domain stretch occupies residues 1-54 (MVYLRYFKGLILSDAYAPGLKWSDELKAYSALAFKYRDVRKYFLEKEIEVEENV). Positions 77–221 (VKAWLKEKRG…LYPILVGPIV (145 aa)) constitute a Helicase ATP-binding domain. ATP contacts are provided by residues 90 to 97 (LPTGAGKT) and Arg127. The DEAH box motif lies at 174–177 (DEVH). The RED motif signature appears at 205–207 (RDD). Positions 227–234 (EELAGKYI) are flexible hinge region. The tract at residues 248–307 (NEEKKRYDGLRKKLKDFLSSRGLKLQNLDDFHRLVKLAAKDKEAREALLAWHESLNIAVN) is thM region. In terms of domain architecture, Helicase C-terminal spans 311–439 (KIEKLREILQ…DYRLSRRRRE (129 aa)).

Belongs to the helicase family. RAD25/XPB subfamily. In terms of assembly, forms a heterodimer with Bax1.

It catalyses the reaction Couples ATP hydrolysis with the unwinding of duplex DNA by translocating in the 3'-5' direction.. The enzyme catalyses ATP + H2O = ADP + phosphate + H(+). In terms of biological role, ATP-dependent DNA translocase which moves along double-stranded DNA (dsDNA) in a 3'-5' direction, unwinding the DNA. The ThM domain grips the resulting 3'-ssDNA tail and functions as a wedge (particularly Phe-278), breaking dsDNA base pairs, probably using the energy from ATP hydrolysis to move along dsDNA. A DNA-dependent ATPase; double-stranded DNA (dsDNA) stimulates the activity more than single-stranded DNA (ssDNA), while Bax1 stimulates ATPase more. In an in vitro assay had no detectable helicase activity. Binds ssDNA better than dsDNA. Has very low ATPase activity that is stimulated by Bax1; dsDNA, Y-form DNA and a DNA substrate with a 6 base pair (bp) bubble in the center stimulate the XPB2-Bax1 ATPase activity about 10- 20-fold more than the absence of DNA. In an XPB2-Bax1-bubble DNA crystal (12 bp of dsDNA, a 6 base bubble and 6 bp of dsDNA) the short 6 bp arm is unwound. The 2 helicase and the ThM domains of XPB2 with the NTD and CRD domains of Bax1 encircle the DNA, forming a tunnel where the 12 bp dsDNA and the ds-ssDNA junction are located. The ThM domain is wedged between the ssDNA tails, with the 5' ssDNA contacting Bax1 and the 3' ssDNA in a channel in XPB2. Bax1 increases the affinity of XPB2 for forked DNA. The polypeptide is DNA 3'-5' translocase XPB2 (Sulfurisphaera tokodaii (strain DSM 16993 / JCM 10545 / NBRC 100140 / 7) (Sulfolobus tokodaii)).